Reading from the N-terminus, the 604-residue chain is Deuterosome assembly protein 1 (604 aa).

Coiled-coil stretches lie at residues 14–59, 85–197, 226–278, and 336–399; these read CEAE…NAQT, MTQN…GKKQ, IIEK…ELQS, and QDQP…KQLK. Ser547 bears the Phosphoserine mark. The stretch at 558 to 601 forms a coiled coil; that stretch reads AAQHFLLEEEKRAKELEKLLNTHIDELQRHTEFTLNKYSKLKQN.

The protein belongs to the CEP63 family. In terms of assembly, interacts with CEP152; the interaction is mutually exclusive with CEP63.

The protein resides in the cytoplasm. Functionally, key structural component of the deuterosome, a structure that promotes de novo centriole amplification in multiciliated cells. Deuterosome-mediated centriole amplification occurs in terminally differentiated multiciliated cells and can generate more than 100 centrioles. Probably sufficient for the specification and formation of the deuterosome inner core. Interacts with CEP152 and recruits PLK4 to activate centriole biogenesis. This chain is Deuterosome assembly protein 1, found in Homo sapiens (Human).